Here is a 546-residue protein sequence, read N- to C-terminus: Cation/calcium exchanger 5 (546 aa).

13 helical membrane-spanning segments follow: residues alanine 13 to proline 33, asparagine 88 to isoleucine 108, alanine 134 to leucine 154, phenylalanine 163 to isoleucine 183, serine 194 to leucine 214, isoleucine 218 to phenylalanine 238, serine 323 to leucine 343, leucine 356 to valine 376, valine 388 to leucine 408, alanine 423 to valine 445, methionine 455 to valine 475, valine 492 to isoleucine 512, and phenylalanine 522 to alanine 542.

Belongs to the Ca(2+):cation antiporter (CaCA) (TC 2.A.19) family. Cation/calcium exchanger (CCX) subfamily.

The protein localises to the cell membrane. Its function is as follows. Membrane-localized H(+)-dependent K(+) and Na(+) transporter. This is Cation/calcium exchanger 5 (CCX5) from Arabidopsis thaliana (Mouse-ear cress).